Consider the following 249-residue polypeptide: Probable calcium-binding protein CML12 (249 aa).

The span at 1-24 (MQSQRERPREDRVHEETRGADHAH) shows a compositional bias: basic and acidic residues. The segment at 1-80 (MQSQRERPRE…RKGKAPATAE (80 aa)) is disordered. The span at 30–56 (AAAAASATATETATRTMSLHAGGVVVV) shows a compositional bias: low complexity. A compositionally biased stretch (basic and acidic residues) spans 57-70 (DGKEKGKKEEGEGK). 4 EF-hand domains span residues 91–126 (EQLRQLHEIFLRFDLDGDGSLTKLELAALLRSLGLR), 128–163 (AAGDEIHALIAAIDADGNGTVEFDELASSLADLILG), 171–206 (VDQAELAEAFRAFDRDGNGFISAAELARSMARMGHP), and 207–242 (ICYAELTDMMREADTDGDGLISFEEFTAIMAKSALD). Residues D104, D106, D108, S110, E115, D141, D143, N145, T147, E152, D184, D186, N188, E195, D220, D222, D224, and E231 each contribute to the Ca(2+) site.

Functionally, potential calcium sensor. This Oryza sativa subsp. japonica (Rice) protein is Probable calcium-binding protein CML12 (CML12).